Here is a 292-residue protein sequence, read N- to C-terminus: MSEIRLYVSTTESQAEQILDLLSEVFGEEDFAIGTTEVDEKRDIWEASVYMMAEDEAQVRSRVETALKSGFPDAQLLREVIPDVDWVVKSLEGLKPVRAGRFLVHGSHDRDKVRPGDIAIEIDAGQAFGTGHHGTTAGCLEVIDRVVRSRRVRNALDLGTGSGVLAIAVRKLKNIPVLATDIDPIATRVAAENVRRNGIASGIVTRTAPGFHSTAFSEHGPFDLIIANILARPLIRMAPQLAAHLAPAGSVILSGILAAQRWKVIAAYSGARLRHVRTIWRNGWVTIHFDRP.

Residues T136, G159, D181, and N228 each contribute to the S-adenosyl-L-methionine site.

The protein belongs to the methyltransferase superfamily. PrmA family.

It localises to the cytoplasm. The enzyme catalyses L-lysyl-[protein] + 3 S-adenosyl-L-methionine = N(6),N(6),N(6)-trimethyl-L-lysyl-[protein] + 3 S-adenosyl-L-homocysteine + 3 H(+). Functionally, methylates ribosomal protein L11. The protein is Ribosomal protein L11 methyltransferase of Rhizobium etli (strain CIAT 652).